We begin with the raw amino-acid sequence, 1006 residues long: D-2-hydroxyglutarate dehydrogenase (1006 aa).

Residues Tyr47–Ile279 enclose the FAD-binding PCMH-type domain. The (R)-2-hydroxyglutarate site is built by Arg397 and His495. In terms of domain architecture, 4Fe-4S ferredoxin-type spans Ser655–Arg687. [4Fe-4S] cluster contacts are provided by Cys665, Cys668, Cys671, and Cys675.

This sequence in the N-terminal section; belongs to the FAD-binding oxidoreductase/transferase type 4 family. [4Fe-4S] cluster is required as a cofactor. Requires FAD as cofactor.

It catalyses the reaction (R)-2-hydroxyglutarate + A = 2-oxoglutarate + AH2. It participates in amino-acid degradation. Catalyzes the oxidation of D-2-hydroxyglutarate (D-2-HGA) to 2-oxoglutarate. Is involved in a D-lysine catabolic pathway. This is D-2-hydroxyglutarate dehydrogenase from Pseudomonas putida (strain ATCC 47054 / DSM 6125 / CFBP 8728 / NCIMB 11950 / KT2440).